The primary structure comprises 338 residues: GTPase Obg (338 aa).

In terms of domain architecture, Obg spans 1 to 159 (MSFIDEVKIN…RWIRMELKLM (159 aa)). Residues 58-79 (DLRQHPHQKAGRGKNGMGSDRH) form a disordered region. The OBG-type G domain maps to 160–331 (ADVGLLGMPS…LLDDIAFNLW (172 aa)). GTP contacts are provided by residues 166 to 173 (GMPSVGKS), 191 to 195 (FTTLK), 213 to 216 (DIPG), 283 to 286 (NKID), and 312 to 314 (SAA). Mg(2+) is bound by residues S173 and T193.

Belongs to the TRAFAC class OBG-HflX-like GTPase superfamily. OBG GTPase family. Monomer. The cofactor is Mg(2+).

It is found in the cytoplasm. Functionally, an essential GTPase which binds GTP, GDP and possibly (p)ppGpp with moderate affinity, with high nucleotide exchange rates and a fairly low GTP hydrolysis rate. Plays a role in control of the cell cycle, stress response, ribosome biogenesis and in those bacteria that undergo differentiation, in morphogenesis control. The sequence is that of GTPase Obg from Citrifermentans bemidjiense (strain ATCC BAA-1014 / DSM 16622 / JCM 12645 / Bem) (Geobacter bemidjiensis).